The following is a 649-amino-acid chain: Forkhead box protein O1 (649 aa).

Disordered regions lie at residues 1 to 62 and 112 to 151; these read MAEA…ASAS and VHSA…SSRR. Threonine 24 bears the Phosphothreonine; by PKB/AKT1 or PKB/AKT2 and SGK1 mark. The span at 33-62 shows a compositional bias: low complexity; sequence NQSNSTTSSPAPSGSTAANPDATASLASAS. The span at 116 to 135 shows a compositional bias: pro residues; that stretch reads PPQPPPTGPLSQPPPVPPAA. A DNA-binding region (fork-head) is located at residues 154–248; that stretch reads WGNLSYADLI…KSGKSPRRRA (95 aa). DNA-binding regions lie at residues 205-212 and 228-231; these read NSIRHNLS and SSWW. Serine 206 is modified (phosphoserine; by STK4/MST1). Serine 212, serine 228, and serine 229 each carry phosphoserine. The disordered stretch occupies residues 228–339; that stretch reads SSWWMLNPEG…DDLGDGDVHS (112 aa). N6-acetyllysine is present on residues lysine 239 and lysine 242. The residue at position 243 (serine 243) is a Phosphoserine; by CDK1. Arginine 245 and arginine 247 each carry omega-N-methylarginine; by PRMT1. A Nuclear localization signal motif is present at residues 245–247; the sequence is RRR. Serine 250 is modified (phosphoserine; by PKB/AKT1 and SGK1). N6-acetyllysine occurs at positions 256, 259, and 268. Positions 258 to 269 are enriched in basic residues; the sequence is AKSRGRAAKKKA. The segment at 277-557 is sufficient for interaction with NLK; the sequence is GPGDSPGSQF…RLTPVKTPLQ (281 aa). Phosphoserine occurs at positions 281 and 292. Residues 303–320 are compositionally biased toward polar residues; sequence NWSTFRPRTSSNASTISG. At serine 313 the chain carries Phosphoserine; by PKB/AKT1. Position 316 is a phosphoserine; by CK1 and SGK1 (serine 316). Phosphoserine; by CK1 is present on serine 319. Serine 323 is subject to Phosphoserine. Threonine 327 carries the phosphothreonine modification. The tract at residues 357–453 is required for interaction with RUNX2; the sequence is SEISNPENME…GGLNQYNCAP (97 aa). At lysine 417 the chain carries N6-acetyllysine. Positions 456–460 match the Required for interaction with SIRT1 motif; that stretch reads LKELL.

Interacts with LRPPRC. Interacts with RUNX2; the interaction inhibits RUNX2 transcriptional activity and mediates the IGF1/insulin-dependent BGLAP expression in osteoblasts Interacts with PPP2R1A; the interaction regulates the dephosphorylation of FOXO1 at Thr-24 and Ser-250 leading to its nuclear import. Interacts with NLK. Interacts with SIRT1; the interaction results in the deacetylation of FOXO1 leading to activation of FOXO1-mediated transcription of genes involved in DNA repair and stress resistance. Binds to CDK1. Interacts with the 14-3-3 proteins, YWHAG and YWHAZ; the interactions require insulin-stimulated phosphorylation on Thr-24, promote nuclear exit and loss of transcriptional activity. Interacts with SKP2; the interaction ubiquitinates FOXO1 leading to its proteasomal degradation. The interaction requires the presence of KRIT1. Interacts (via the C-terminal half) with ATF4 (via its DNA binding domain); the interaction occurs in osteoblasts, regulates glucose homeostasis via suppression of beta-cell proliferation and subsequent decrease in insulin production. Interacts with PRMT1; the interaction methylates FOXO1, prevents PKB/AKT1 phosphorylation and retains FOXO1 in the nucleus. Interacts with EP300 and CREBBP; the interactions acetylate FOXO1. Interacts with SIRT2; the interaction is disrupted in response to oxidative stress or serum deprivation, leading to increased level of acetylated FOXO1, which promotes stress-induced autophagy by stimulating E1-like activating enzyme ATG7. Interacts (acetylated form) with ATG7; the interaction is increased in response to oxidative stress or serum deprivation and promotes the autophagic process leading to cell death. Interacts (acetylated form) with PPARG. Interacts with XBP1; this interaction is direct and leads to FOXO1 ubiquitination and degradation via the proteasome pathway. Interacts (via the Fork-head domain) with CEBPA; the interaction increases when FOXO1 is deacetylated. Interacts with WDFY2. Forms a complex with WDFY2 and AKT1. Interacts with CRY1. Interacts with PPIA/CYPA; the interaction promotes FOXO1 dephosphorylation, nuclear accumulation and transcriptional activity. Interacts with TOX4; FOXO1 is required for full induction of TOX4-dependent activity and the interaction is inhibited by insulin. Interacts (when phosphorylated on Ser-250) with STUB1/CHIP. In terms of processing, phosphorylation by NLK promotes nuclear export and inhibits the transcriptional activity. In response to growth factors, phosphorylation on Thr-24, Ser-250 and Ser-313 by PKB/AKT1 promotes nuclear export and inactivation of transactivational activity. Phosphorylation on Thr-24 is required for binding 14-3-3 proteins. Phosphorylation of Ser-250 decreases DNA-binding activity and promotes the phosphorylation of Thr-24 and Ser-313, permitting phosphorylation of Ser-316 and Ser-319, probably by CDK1, leading to nuclear exclusion and loss of function. Stress signals, such as response to oxygen or nitric oxide, attenuate the PKB/AKT1-mediated phosphorylation leading to nuclear retention. Phosphorylation of Ser-323 is independent of IGF1 and leads to reduced function. Dephosphorylated on Thr-24 and Ser-250 by PP2A in beta-cells under oxidative stress leading to nuclear retention. Phosphorylation of Ser-243 by CDK1 disrupts binding of 14-3-3 proteins leading to nuclear accumulation and has no effect on DNA binding nor transcriptional activity. Phosphorylation by STK4/MST1 on Ser-206, upon oxidative stress, inhibits binding to 14-3-3 proteins and nuclear export. PPIA/CYPA promotes its dephosphorylation on Ser-250. Ubiquitinated by SKP2. Ubiquitination leads to proteasomal degradation. Ubiquitinated by STUB1/CHIP; when Ser-250 is phosphorylated. Post-translationally, methylation inhibits AKT1-mediated phosphorylation at Ser-250 and is increased by oxidative stress. In terms of processing, acetylated. Acetylation at Lys-256 and Lys-268 are necessary for autophagic cell death induction. Deacetylated by SIRT2 in response to oxidative stress or serum deprivation, thereby negatively regulating FOXO1-mediated autophagic cell death. Once in the nucleus, acetylated by CREBBP/EP300. Acetylation diminishes the interaction with target DNA and attenuates the transcriptional activity. It increases the phosphorylation at Ser-250. Deacetylation by SIRT1 results in reactivation of the transcriptional activity. Oxidative stress by hydrogen peroxide treatment appears to promote deacetylation and uncoupling of insulin-induced phosphorylation. By contrast, resveratrol acts independently of acetylation. Acetylated at Lys-417, promoting its localization to the nucleus and transcription factor activity. Deacetylation at Lys-417 by SIRT6, promotes its translocation into the cytoplasm, preventing its transcription factor activity. Deacetylation and subsequent inhibition by SIRT6 has different effects depending on cell types: it inhibits gluconeogenesis in hepatocytes, promotes glucose sensing in pancreatic beta-cells and regulates lipid catabolism in brown adipocytes. Expressed in the internal elastic lamina of the carotid artery (at protein level).

It is found in the cytoplasm. Its subcellular location is the nucleus. Its function is as follows. Transcription factor that is the main target of insulin signaling and regulates metabolic homeostasis in response to oxidative stress. Binds to the insulin response element (IRE) with consensus sequence 5'-TT[G/A]TTTTG-3' and the related Daf-16 family binding element (DBE) with consensus sequence 5'-TT[G/A]TTTAC-3'. Activity suppressed by insulin. Main regulator of redox balance and osteoblast numbers and controls bone mass. Orchestrates the endocrine function of the skeleton in regulating glucose metabolism. Also acts as a key regulator of chondrogenic commitment of skeletal progenitor cells in response to lipid availability: when lipids levels are low, translocates to the nucleus and promotes expression of SOX9, which induces chondrogenic commitment and suppresses fatty acid oxidation. Acts synergistically with ATF4 to suppress osteocalcin/BGLAP activity, increasing glucose levels and triggering glucose intolerance and insulin insensitivity. Also suppresses the transcriptional activity of RUNX2, an upstream activator of osteocalcin/BGLAP. Acts as an inhibitor of glucose sensing in pancreatic beta cells by acting as a transcription repressor and suppressing expression of PDX1. In hepatocytes, promotes gluconeogenesis by acting together with PPARGC1A and CEBPA to activate the expression of genes such as IGFBP1, G6PC1 and PCK1. Also promotes gluconeogenesis by directly promoting expression of PPARGC1A and G6PC1. Important regulator of cell death acting downstream of CDK1, PKB/AKT1 and STK4/MST1. Promotes neural cell death. Mediates insulin action on adipose tissue. Regulates the expression of adipogenic genes such as PPARG during preadipocyte differentiation and, adipocyte size and adipose tissue-specific gene expression in response to excessive calorie intake. Regulates the transcriptional activity of GADD45A and repair of nitric oxide-damaged DNA in beta-cells. Required for the autophagic cell death induction in response to starvation or oxidative stress in a transcription-independent manner. Mediates the function of MLIP in cardiomyocytes hypertrophy and cardiac remodeling. Positive regulator of apoptosis in cardiac smooth muscle cells as a result of its transcriptional activation of pro-apoptotic genes. Regulates endothelial cell (EC) viability and apoptosis in a PPIA/CYPA-dependent manner via transcription of CCL2 and BCL2L11 which are involved in EC chemotaxis and apoptosis. In Rattus norvegicus (Rat), this protein is Forkhead box protein O1 (Foxo1).